The primary structure comprises 80 residues: Exodeoxyribonuclease 7 small subunit (80 aa).

Belongs to the XseB family. In terms of assembly, heterooligomer composed of large and small subunits.

It is found in the cytoplasm. The enzyme catalyses Exonucleolytic cleavage in either 5'- to 3'- or 3'- to 5'-direction to yield nucleoside 5'-phosphates.. Its function is as follows. Bidirectionally degrades single-stranded DNA into large acid-insoluble oligonucleotides, which are then degraded further into small acid-soluble oligonucleotides. The sequence is that of Exodeoxyribonuclease 7 small subunit from Pseudoalteromonas translucida (strain TAC 125).